Here is a 76-residue protein sequence, read N- to C-terminus: Conotoxin PnMKLT1-1111 (76 aa).

The first 22 residues, 1–22 (MKLTCMMIVAVLFLTAWTVVTA), serve as a signal peptide directing secretion. Residues 23–50 (VPHSNKRLANLYLKARHEMKNPEASNVD) constitute a propeptide that is removed on maturation. Cystine bridges form between C53/C67, C60/C71, and C66/C75.

It belongs to the conotoxin O1 superfamily. As to expression, expressed by the venom duct.

Its subcellular location is the secreted. In Conus pennaceus (Feathered cone), this protein is Conotoxin PnMKLT1-1111.